Reading from the N-terminus, the 78-residue chain is Large ribosomal subunit protein bL28B (78 aa).

The tract at residues 1–29 (MSAHCQVTGRKPGFGNTVSHSHRRSRRRW) is disordered. Residues 20 to 29 (HSHRRSRRRW) are compositionally biased toward basic residues.

It belongs to the bacterial ribosomal protein bL28 family.

This chain is Large ribosomal subunit protein bL28B (rpmB2), found in Mycobacterium bovis (strain ATCC BAA-935 / AF2122/97).